Here is a 357-residue protein sequence, read N- to C-terminus: Geranylgeranyl pyrophosphate synthase spyE (357 aa).

The disordered stretch occupies residues 36-60 (EAQSQAVPGTRTETEPTGSSPSDLQ). The segment covering 50–59 (EPTGSSPSDL) has biased composition (polar residues). Residues lysine 84, arginine 87, and histidine 116 each contribute to the isopentenyl diphosphate site. Aspartate 123 and aspartate 127 together coordinate Mg(2+). Arginine 132 contacts dimethylallyl diphosphate. Residue arginine 133 coordinates isopentenyl diphosphate. The dimethylallyl diphosphate site is built by lysine 210, threonine 211, and glutamine 244. Aspartate 247 contacts Mg(2+). Dimethylallyl diphosphate is bound by residues asparagine 251, lysine 261, and lysine 271.

It belongs to the FPP/GGPP synthase family. Mg(2+) is required as a cofactor.

It catalyses the reaction isopentenyl diphosphate + dimethylallyl diphosphate = (2E)-geranyl diphosphate + diphosphate. The catalysed reaction is isopentenyl diphosphate + (2E)-geranyl diphosphate = (2E,6E)-farnesyl diphosphate + diphosphate. The enzyme catalyses isopentenyl diphosphate + (2E,6E)-farnesyl diphosphate = (2E,6E,10E)-geranylgeranyl diphosphate + diphosphate. It participates in secondary metabolite biosynthesis; terpenoid biosynthesis. Its function is as follows. Geranylgeranyl pyrophosphate synthase; part of the gene cluster that mediates the biosynthesis of meroterpenoids called sartorypyrones. Within the pathway, spyE provides the spyF cosubstrate geranylgeranyl pyrophosphate (GGPP) for the prenylation of triacetic acid lactone (TAL). The biosynthesis of sartorypyrones begins with the production of triacetic acid lactone (TAL) by the NR-PKS spyA using one molecule of acetyl-CoA and two molecules of malonyl-CoA. The prenyltransferase spyF then conjugates geranylgeranyl pyrophosphate (GGPP) to TAL to form geranylgeranyl-triacetate lactone, for which the pathway-specific geranylgeranyl pyrophosphate synthase (GGPS) spyE is required to provide GGPP. Subsequently, geranylgeranyl-triacetate lactone is epoxidized at the terminal olein by the FAD-dependent monooxygenase spyC, followed by cyclization of the terpenoid component catalyzed by the terpene cyclase spyD to produce both the bicyclic sartorypyrone F and the monocyclic sartorypyrone D. Finally, the last step of the biosynthesis involves the acetylation of the meroterpenoids sartorypyrones D and F by the acetyltransferase SpyB to produce sartorypyrones A and G, respectively. The protein is Geranylgeranyl pyrophosphate synthase spyE of Aspergillus fumigatus (strain ATCC MYA-4609 / CBS 101355 / FGSC A1100 / Af293) (Neosartorya fumigata).